The chain runs to 57 residues: MAVPKKKTSKSKRDKRRATWRHKAVVEAQKALSLGKSILTGRSTFVYPTAEEEEEES.

The segment at 1-22 (MAVPKKKTSKSKRDKRRATWRH) is disordered.

The protein belongs to the bacterial ribosomal protein bL32 family.

This Nostoc punctiforme (strain ATCC 29133 / PCC 73102) protein is Large ribosomal subunit protein bL32.